The primary structure comprises 142 residues: MTTIDTISDVITRIRNANILKLDRVELINTKVAIGICHILKDRGFINSFGEFLNSSDRMSNRRFIQKYIIVNLKYKGERRSPCIKELRRISKPGRRVYVGYKNLHKTKGGIELFVLSTSKGLITDYTAREKGIGGELLFSIC.

It belongs to the universal ribosomal protein uS8 family. In terms of assembly, part of the 30S ribosomal subunit.

The protein resides in the plastid. Functionally, one of the primary rRNA binding proteins, it binds directly to 16S rRNA central domain where it helps coordinate assembly of the platform of the 30S subunit. In Euglena longa (Euglenophycean alga), this protein is Small ribosomal subunit protein uS8c (rps8).